The following is a 325-amino-acid chain: N-acetyl-gamma-glutamyl-phosphate reductase (325 aa).

Residue C135 is part of the active site.

It belongs to the NAGSA dehydrogenase family. Type 1 subfamily.

It localises to the cytoplasm. The enzyme catalyses N-acetyl-L-glutamate 5-semialdehyde + phosphate + NADP(+) = N-acetyl-L-glutamyl 5-phosphate + NADPH + H(+). It participates in amino-acid biosynthesis; L-arginine biosynthesis; N(2)-acetyl-L-ornithine from L-glutamate: step 3/4. Functionally, catalyzes the NADPH-dependent reduction of N-acetyl-5-glutamyl phosphate to yield N-acetyl-L-glutamate 5-semialdehyde. The sequence is that of N-acetyl-gamma-glutamyl-phosphate reductase from Karelsulcia muelleri (strain GWSS) (Sulcia muelleri).